Here is a 1276-residue protein sequence, read N- to C-terminus: Probable histone acetyltransferase HAC-like 3 (1276 aa).

The tract at residues Val-391–Lys-421 is disordered. The segment covering Gln-396–Ser-413 has biased composition (polar residues). The segment at Ser-621–Lys-689 adopts a PHD-type zinc-finger fold. Positions Ile-704–Cys-1130 constitute a CBP/p300-type HAT domain. Residues Ile-827–Ser-829, Arg-846–Thr-847, and Trp-902 contribute to the acetyl-CoA site. The stretch at Glu-953–Leu-973 forms a coiled coil. 2 ZZ-type zinc fingers span residues Cys-1013–Leu-1076 and Leu-1125–Tyr-1187. Residues Cys-1018, Cys-1021, Cys-1033, Cys-1036, Cys-1042, Cys-1045, His-1058, His-1066, Cys-1130, Cys-1133, Cys-1145, Cys-1148, Cys-1154, Cys-1157, His-1168, and His-1177 each contribute to the Zn(2+) site. The TAZ-type zinc-finger motif lies at His-1177–Ile-1260.

The protein resides in the nucleus. It catalyses the reaction L-lysyl-[protein] + acetyl-CoA = N(6)-acetyl-L-lysyl-[protein] + CoA + H(+). Its function is as follows. Acetyltransferase enzyme. Acetylates histones, giving a specific tag for transcriptional activation. The sequence is that of Probable histone acetyltransferase HAC-like 3 from Oryza sativa subsp. japonica (Rice).